We begin with the raw amino-acid sequence, 355 residues long: UDP-N-acetylglucosamine--N-acetylmuramyl-(pentapeptide) pyrophosphoryl-undecaprenol N-acetylglucosamine transferase (355 aa).

UDP-N-acetyl-alpha-D-glucosamine contacts are provided by residues 7 to 9 (TGG), Asn-119, Arg-159, Ser-187, Ile-241, and Gln-286.

It belongs to the glycosyltransferase 28 family. MurG subfamily.

Its subcellular location is the cell inner membrane. The enzyme catalyses di-trans,octa-cis-undecaprenyl diphospho-N-acetyl-alpha-D-muramoyl-L-alanyl-D-glutamyl-meso-2,6-diaminopimeloyl-D-alanyl-D-alanine + UDP-N-acetyl-alpha-D-glucosamine = di-trans,octa-cis-undecaprenyl diphospho-[N-acetyl-alpha-D-glucosaminyl-(1-&gt;4)]-N-acetyl-alpha-D-muramoyl-L-alanyl-D-glutamyl-meso-2,6-diaminopimeloyl-D-alanyl-D-alanine + UDP + H(+). Its pathway is cell wall biogenesis; peptidoglycan biosynthesis. In terms of biological role, cell wall formation. Catalyzes the transfer of a GlcNAc subunit on undecaprenyl-pyrophosphoryl-MurNAc-pentapeptide (lipid intermediate I) to form undecaprenyl-pyrophosphoryl-MurNAc-(pentapeptide)GlcNAc (lipid intermediate II). The chain is UDP-N-acetylglucosamine--N-acetylmuramyl-(pentapeptide) pyrophosphoryl-undecaprenol N-acetylglucosamine transferase from Nitrosomonas eutropha (strain DSM 101675 / C91 / Nm57).